The sequence spans 199 residues: NAD(P)H dehydrogenase (quinone) (199 aa).

Residues 4-190 enclose the Flavodoxin-like domain; that stretch reads VLVLYYSAYG…AGARYQGKTI (187 aa). Residues 10 to 15 and 78 to 80 each bind FMN; these read SAYGHI and TRF. Tyrosine 12 contacts NAD(+). Tryptophan 98 contacts substrate. FMN contacts are provided by residues 113 to 119 and histidine 134; that span reads STATQHG.

It belongs to the WrbA family. It depends on FMN as a cofactor.

The catalysed reaction is a quinone + NADH + H(+) = a quinol + NAD(+). The enzyme catalyses a quinone + NADPH + H(+) = a quinol + NADP(+). The chain is NAD(P)H dehydrogenase (quinone) from Rhodopseudomonas palustris (strain TIE-1).